Consider the following 364-residue polypeptide: Fructose-bisphosphate aldolase B (364 aa).

An N-acetylalanine modification is found at alanine 2. At lysine 13 the chain carries N6-succinyllysine. Serine 36 carries the phosphoserine modification. Threonine 39 bears the Phosphothreonine mark. Arginine 43 is a beta-D-fructose 1,6-bisphosphate binding site. A Phosphoserine modification is found at serine 89. Residue threonine 119 is modified to Phosphothreonine. Lysine 121 carries the N6-succinyllysine modification. Serine 132 is subject to Phosphoserine. Catalysis depends on glutamate 188, which acts as the Proton acceptor. Serine 206 bears the Phosphoserine mark. The active-site Schiff-base intermediate with dihydroxyacetone-P is lysine 230. Phosphoserine is present on residues serine 272, serine 276, serine 299, and serine 301. Position 272–274 (272–274) interacts with beta-D-fructose 1,6-bisphosphate; the sequence is SGG. Arginine 304 is a binding site for beta-D-fructose 1,6-bisphosphate. Serine 309 carries the phosphoserine modification. Residue lysine 317 is modified to N6-succinyllysine.

It belongs to the class I fructose-bisphosphate aldolase family. As to quaternary structure, homotetramer. Interacts with BBS1, BBS2, BBS4 and BBS7. Forms a ternary complex with G6PD and TP53; this interaction is direct.

It is found in the cytoplasm. It localises to the cytosol. Its subcellular location is the cytoskeleton. The protein resides in the microtubule organizing center. The protein localises to the centrosome. It is found in the centriolar satellite. The catalysed reaction is beta-D-fructose 1,6-bisphosphate = D-glyceraldehyde 3-phosphate + dihydroxyacetone phosphate. The enzyme catalyses beta-D-fructose 1-phosphate = D-glyceraldehyde + dihydroxyacetone phosphate. It participates in carbohydrate degradation; glycolysis; D-glyceraldehyde 3-phosphate and glycerone phosphate from D-glucose: step 4/4. Its pathway is carbohydrate biosynthesis; gluconeogenesis. It functions in the pathway carbohydrate metabolism; fructose metabolism. Functionally, catalyzes the aldol cleavage of fructose 1,6-biphosphate to form two triosephosphates dihydroxyacetone phosphate and D-glyceraldehyde 3-phosphate in glycolysis as well as the reverse stereospecific aldol addition reaction in gluconeogenesis. In fructolysis, metabolizes fructose 1-phosphate derived from the phosphorylation of dietary fructose by fructokinase into dihydroxyacetone phosphate and D-glyceraldehyde. Acts as an adapter independently of its enzymatic activity, exerts a tumor suppressor role by stabilizing the ternary complex with G6PD and TP53 to inhibit G6PD activity and keep oxidative pentose phosphate metabolism in check. This chain is Fructose-bisphosphate aldolase B, found in Mus musculus (Mouse).